The sequence spans 355 residues: Heterogeneous nuclear ribonucleoprotein D0 (355 aa).

The tract at residues 1 to 91 (MSEEQFGGDG…SSPRHTEAAA (91 aa)) is disordered. An N-acetylserine modification is found at Ser-2. Residues 11–43 (AAAAATAAVGGSAGEQEGAMVAAAAQGPAAAAG) are compositionally biased toward low complexity. A compositionally biased stretch (gly residues) spans 44–58 (SGSGGGGSAAGGTEG). Residues 64–73 (EGAKIDASKN) are compositionally biased toward basic and acidic residues. Phosphoserine is present on Ser-71. Lys-72 is covalently cross-linked (Glycyl lysine isopeptide (Lys-Gly) (interchain with G-Cter in SUMO2)). Ser-80, Ser-82, and Ser-83 each carry phosphoserine. RRM domains lie at 97–179 (WKMF…KTKE) and 182–261 (KKIF…MSKE). N6-methyllysine is present on Lys-119. A Phosphothreonine modification is found at Thr-127. Lys-129 participates in a covalent cross-link: Glycyl lysine isopeptide (Lys-Gly) (interchain with G-Cter in SUMO2). Lys-165 is modified (N6-acetyllysine). Ser-190 is subject to Phosphoserine. Thr-193 is modified (phosphothreonine). Lys-197 is covalently cross-linked (Glycyl lysine isopeptide (Lys-Gly) (interchain with G-Cter in SUMO2)). Lys-243 and Lys-251 each carry N6-acetyllysine. 2 positions are modified to omega-N-methylarginine: Glu-261 and Tyr-263. Ser-271 is modified (phosphoserine). An omega-N-methylarginine mark is found at Arg-272, Arg-278, Arg-280, and Arg-282. Arg-345 is modified (asymmetric dimethylarginine; alternate). Arg-345 bears the Dimethylated arginine; alternate mark. Arg-345 carries the omega-N-methylarginine; alternate modification.

In terms of assembly, identified in a IGF2BP1-dependent mRNP granule complex containing untranslated mRNAs. Part of a complex associated with the FOS mCRD domain and consisting of PABPC1, PAIP1, CSDE1/UNR and SYNCRIP. Interacts with IGF2BP2. Interacts with GTPBP1. Interacts with EIF4G1; the interaction requires RNA. Interacts with EIF3B and RPS3. In terms of processing, methylated by PRMT1, in an insulin-dependent manner. The PRMT1-mediated methylation regulates its phosphorylation. Post-translationally, arg-345 is dimethylated, probably to asymmetric dimethylarginine.

It is found in the nucleus. The protein resides in the cytoplasm. Functionally, binds with high affinity to RNA molecules that contain AU-rich elements (AREs) found within the 3'-UTR of many proto-oncogenes and cytokine mRNAs. Also binds to double- and single-stranded DNA sequences in a specific manner and functions a transcription factor. Each of the RNA-binding domains specifically can bind solely to a single-stranded non-monotonous 5'-UUAG-3' sequence and also weaker to the single-stranded 5'-TTAGGG-3' telomeric DNA repeat. Binds RNA oligonucleotides with 5'-UUAGGG-3' repeats more tightly than the telomeric single-stranded DNA 5'-TTAGGG-3' repeats. Binding of RRM1 to DNA inhibits the formation of DNA quadruplex structure which may play a role in telomere elongation. May be involved in translationally coupled mRNA turnover. Implicated with other RNA-binding proteins in the cytoplasmic deadenylation/translational and decay interplay of the FOS mRNA mediated by the major coding-region determinant of instability (mCRD) domain. May play a role in the regulation of the rhythmic expression of circadian clock core genes. Directly binds to the 3'UTR of CRY1 mRNA and induces CRY1 rhythmic translation. May also be involved in the regulation of PER2 translation. This is Heterogeneous nuclear ribonucleoprotein D0 (Hnrnpd) from Mus musculus (Mouse).